The chain runs to 146 residues: Hemoglobin subunit beta (146 aa).

Val-1 is modified (N-acetylvaline). The region spanning His-2 to His-146 is the Globin domain. At Ser-44 the chain carries Phosphoserine. Residue Lys-59 is modified to N6-acetyllysine. His-63 contributes to the heme b binding site. The residue at position 82 (Lys-82) is an N6-acetyllysine. Residue His-92 coordinates heme b. At Cys-93 the chain carries S-nitrosocysteine. Lys-144 is subject to N6-acetyllysine.

This sequence belongs to the globin family. Heterotetramer of two alpha chains and two beta chains. As to expression, red blood cells.

Involved in oxygen transport from the lung to the various peripheral tissues. The polypeptide is Hemoglobin subunit beta (HBB) (Lyroderma lyra (Greater Asian false-vampire bat)).